Here is a 249-residue protein sequence, read N- to C-terminus: 5'-nucleotidase SurE (249 aa).

Residues Asp-8, Asp-9, Ser-39, and Asn-91 each contribute to the a divalent metal cation site.

This sequence belongs to the SurE nucleotidase family. A divalent metal cation is required as a cofactor.

Its subcellular location is the cytoplasm. The enzyme catalyses a ribonucleoside 5'-phosphate + H2O = a ribonucleoside + phosphate. Its function is as follows. Nucleotidase that shows phosphatase activity on nucleoside 5'-monophosphates. The protein is 5'-nucleotidase SurE of Haemophilus influenzae (strain PittEE).